A 426-amino-acid polypeptide reads, in one-letter code: 3-phosphoshikimate 1-carboxyvinyltransferase (426 aa).

3-phosphoshikimate contacts are provided by Lys-22, Ser-23, and Arg-27. Residue Lys-22 coordinates phosphoenolpyruvate. The phosphoenolpyruvate site is built by Gly-96 and Arg-124. Residues Ser-170, Ser-171, Gln-172, Ser-198, Asp-314, Asn-337, and Lys-341 each coordinate 3-phosphoshikimate. Position 172 (Gln-172) interacts with phosphoenolpyruvate. Asp-314 acts as the Proton acceptor in catalysis. Phosphoenolpyruvate is bound by residues Arg-345, Arg-387, and Lys-412.

The protein belongs to the EPSP synthase family. In terms of assembly, monomer.

The protein localises to the cytoplasm. It carries out the reaction 3-phosphoshikimate + phosphoenolpyruvate = 5-O-(1-carboxyvinyl)-3-phosphoshikimate + phosphate. It participates in metabolic intermediate biosynthesis; chorismate biosynthesis; chorismate from D-erythrose 4-phosphate and phosphoenolpyruvate: step 6/7. Functionally, catalyzes the transfer of the enolpyruvyl moiety of phosphoenolpyruvate (PEP) to the 5-hydroxyl of shikimate-3-phosphate (S3P) to produce enolpyruvyl shikimate-3-phosphate and inorganic phosphate. The polypeptide is 3-phosphoshikimate 1-carboxyvinyltransferase (Photobacterium damsela subsp. piscicida (Pasteurella piscicida)).